The sequence spans 588 residues: Thioredoxin domain-containing protein 3 (588 aa).

A Thioredoxin domain is found at 2-119 (ASKKREVQLQ…VINLIDEERK (118 aa)). The cysteines at positions 39 and 42 are disulfide-linked. NDK regions lie at residues 157–257 (IAII…DQPE), 315–455 (LEKT…STLG), and 456–588 (LIKP…PEEN). Residues 230–261 (GSKHNPPSEETEPQTDTEPNERSEDQPEVEAQ) are disordered.

It in the C-terminal section; belongs to the NDK family. As to quaternary structure, monomer. Testis-specific. Expressed only in primary spermatocytes and round spermatids.

It is found in the cytoplasm. Functionally, probably required during the final stages of sperm tail maturation in the testis and/or epididymis, where extensive disulfide bonding of fibrous sheath (FS) proteins occurs. In vitro, it has neither nucleoside diphosphate kinase (NDPK) activity nor reducing activity on disulfide bonds. Exhibits a 3'-5' exonuclease activity with a preference for single-stranded DNA, suggesting roles in DNA proofreading and repair. This chain is Thioredoxin domain-containing protein 3, found in Homo sapiens (Human).